The primary structure comprises 620 residues: Arginine--tRNA ligase (620 aa).

The 'HIGH' region motif lies at 147 to 157 (ANPTGPIHIGG).

Belongs to the class-I aminoacyl-tRNA synthetase family. In terms of assembly, monomer.

It is found in the cytoplasm. It carries out the reaction tRNA(Arg) + L-arginine + ATP = L-arginyl-tRNA(Arg) + AMP + diphosphate. The polypeptide is Arginine--tRNA ligase (Bifidobacterium longum (strain DJO10A)).